Reading from the N-terminus, the 34-residue chain is Voltage sensor toxin 3 (34 aa).

3 disulfide bridges follow: Cys2-Cys17, Cys9-Cys22, and Cys16-Cys29.

This sequence belongs to the neurotoxin 10 (Hwtx-1) family. 61 (VSTX3) subfamily. In terms of tissue distribution, expressed by the venom gland.

The protein localises to the secreted. In terms of biological role, potent voltage-gated sodium channel blocker (IC(50)=190 nM and 210 nM on human and rat Nav1.3/SCN3A respectively, 430 nM on human Nav1.7/SCN9A, 770 nM and 290 nM on human and rat Nav1.8/SCN10A, respectively). Binds the voltage-sensor domain of the potassium channel KvAP (from Aeropyrum pernix) and weakly inhibits this channel. The polypeptide is Voltage sensor toxin 3 (Grammostola rosea (Chilean rose tarantula)).